Here is a 196-residue protein sequence, read N- to C-terminus: Large ribosomal subunit protein bL25 (196 aa).

Belongs to the bacterial ribosomal protein bL25 family. CTC subfamily. As to quaternary structure, part of the 50S ribosomal subunit; part of the 5S rRNA/L5/L18/L25 subcomplex. Contacts the 5S rRNA. Binds to the 5S rRNA independently of L5 and L18.

Functionally, this is one of the proteins that binds to the 5S RNA in the ribosome where it forms part of the central protuberance. This chain is Large ribosomal subunit protein bL25, found in Treponema pallidum subsp. pallidum (strain SS14).